Here is a 238-residue protein sequence, read N- to C-terminus: 7-cyano-7-deazaguanine synthase (238 aa).

Residue 12 to 22 (FSGGQDSGTCL) coordinates ATP. 4 residues coordinate Zn(2+): Cys200, Cys215, Cys218, and Cys221.

The protein belongs to the QueC family. It depends on Zn(2+) as a cofactor.

The catalysed reaction is 7-carboxy-7-deazaguanine + NH4(+) + ATP = 7-cyano-7-deazaguanine + ADP + phosphate + H2O + H(+). It functions in the pathway purine metabolism; 7-cyano-7-deazaguanine biosynthesis. In terms of biological role, catalyzes the ATP-dependent conversion of 7-carboxy-7-deazaguanine (CDG) to 7-cyano-7-deazaguanine (preQ(0)). The chain is 7-cyano-7-deazaguanine synthase from Lawsonia intracellularis (strain PHE/MN1-00).